A 64-amino-acid polypeptide reads, in one-letter code: Large ribosomal subunit protein bL35 (64 aa).

Over residues 1 to 10 (MPKMKTNSAA) the composition is skewed to polar residues. Residues 1–64 (MPKMKTNSAA…AKKLHQLLQK (64 aa)) are disordered. Positions 54 to 64 (QAKKLHQLLQK) are enriched in basic residues.

It belongs to the bacterial ribosomal protein bL35 family.

The sequence is that of Large ribosomal subunit protein bL35 from Bifidobacterium longum (strain NCC 2705).